Reading from the N-terminus, the 216-residue chain is Elongation factor 1-beta (216 aa).

It belongs to the EF-1-beta/EF-1-delta family. As to quaternary structure, EF-1 is composed of 4 subunits: alpha, beta, delta, and gamma. Interacts with actin.

It is found in the cytoplasm. Functionally, EF-1-beta and EF-1-delta stimulate the exchange of GDP bound to EF-1-alpha to GTP. This Dictyostelium discoideum (Social amoeba) protein is Elongation factor 1-beta (efa1B).